The following is a 495-amino-acid chain: Two-component response regulator-like APRR3 (495 aa).

The 119-residue stretch at 65 to 183 folds into the Response regulatory domain; that stretch reads KVLLVENDDS…ELKNLWQHVW (119 aa). 2 disordered regions span residues 188 to 441 and 465 to 495; these read SSSG…RWAQ and HSRKKLAEQRPHVKGQFIRKRDDHKSGSEDN. The segment covering 206–217 has biased composition (polar residues); that stretch reads PESTQGSENDAS. Residues 231 to 248 are compositionally biased toward low complexity; the sequence is GLSNQDGGSDNGSGTQSS. Polar residues predominate over residues 256-265; sequence TKSTSPSNQF. The segment covering 284-293 has biased composition (basic and acidic residues); sequence RLKEAEDQKE. Positions 294–304 are enriched in polar residues; it reads QIGTGSQTGMS. Basic and acidic residues predominate over residues 307–319; the sequence is KKAEEPGDLEKNA. Residues 335 to 350 show a composition bias toward polar residues; it reads NRSSGNSQVESKAPSS. Positions 349–372 form a coiled coil; it reads SSNREDLQSLEQTLKKTREDRDYK. Residues 351–378 show a composition bias toward basic and acidic residues; sequence NREDLQSLEQTLKKTREDRDYKVGDRSV. 2 stretches are compositionally biased toward polar residues: residues 380–395 and 420–436; these read RHSNLSAFSKYNNGAT and GSSSSSDNPLKQQSSGS. The CCT domain occupies 442 to 484; it reads REAALMKFRLKRKERCFEKKVRYHSRKKLAEQRPHVKGQFIRK. Over residues 483–495 the composition is skewed to basic and acidic residues; it reads RKRDDHKSGSEDN.

Belongs to the ARR-like family. Interacts with APRR1/TOC1 (via N-terminus). Phosphorylated by WNK1; during the night. Phosphorylation is required for optimal interaction with APRR1/TOC1.

It is found in the nucleus. Functionally, controls photoperiodic flowering response. Component of the circadian clock. Controls the degradation of APRR1/TOC1 by the SCF(ZTL) complex. Expression of several members of the ARR-like family is controlled by circadian rhythm. The particular coordinated sequential expression of APRR9, APRR7, APRR5, APRR3 and APPR1 result to circadian waves that may be at the basis of the endogenous circadian clock. This chain is Two-component response regulator-like APRR3 (APRR3), found in Arabidopsis thaliana (Mouse-ear cress).